The chain runs to 270 residues: Urease accessory protein UreD (270 aa).

It belongs to the UreD family. In terms of assembly, ureD, UreF and UreG form a complex that acts as a GTP-hydrolysis-dependent molecular chaperone, activating the urease apoprotein by helping to assemble the nickel containing metallocenter of UreC. The complex may form in the order UreABCD, UreABCDF, UreABCDFG. The UreE protein probably delivers the nickel in a GTPase-dependent fashion.

It is found in the cytoplasm. Functionally, necessary for the functional incorporation of the urease nickel metallocenter. The chain is Urease accessory protein UreD from Klebsiella aerogenes (Enterobacter aerogenes).